Here is a 457-residue protein sequence, read N- to C-terminus: Siroheme synthase (457 aa).

The interval methionine 1 to threonine 204 is precorrin-2 dehydrogenase /sirohydrochlorin ferrochelatase. NAD(+) contacts are provided by residues aspartate 22–valine 23 and leucine 43–alanine 44. Serine 128 is modified (phosphoserine). Residues glycine 216 to histidine 457 form a uroporphyrinogen-III C-methyltransferase region. Proline 225 is a binding site for S-adenosyl-L-methionine. The active-site Proton acceptor is aspartate 248. Residue lysine 270 is the Proton donor of the active site. S-adenosyl-L-methionine-binding positions include glycine 301–aspartate 303, isoleucine 306, threonine 331–alanine 332, methionine 382, and glycine 411.

The protein in the N-terminal section; belongs to the precorrin-2 dehydrogenase / sirohydrochlorin ferrochelatase family. It in the C-terminal section; belongs to the precorrin methyltransferase family.

The catalysed reaction is uroporphyrinogen III + 2 S-adenosyl-L-methionine = precorrin-2 + 2 S-adenosyl-L-homocysteine + H(+). The enzyme catalyses precorrin-2 + NAD(+) = sirohydrochlorin + NADH + 2 H(+). It catalyses the reaction siroheme + 2 H(+) = sirohydrochlorin + Fe(2+). Its pathway is cofactor biosynthesis; adenosylcobalamin biosynthesis; precorrin-2 from uroporphyrinogen III: step 1/1. The protein operates within cofactor biosynthesis; adenosylcobalamin biosynthesis; sirohydrochlorin from precorrin-2: step 1/1. It functions in the pathway porphyrin-containing compound metabolism; siroheme biosynthesis; precorrin-2 from uroporphyrinogen III: step 1/1. It participates in porphyrin-containing compound metabolism; siroheme biosynthesis; siroheme from sirohydrochlorin: step 1/1. Its pathway is porphyrin-containing compound metabolism; siroheme biosynthesis; sirohydrochlorin from precorrin-2: step 1/1. Multifunctional enzyme that catalyzes the SAM-dependent methylations of uroporphyrinogen III at position C-2 and C-7 to form precorrin-2 via precorrin-1. Then it catalyzes the NAD-dependent ring dehydrogenation of precorrin-2 to yield sirohydrochlorin. Finally, it catalyzes the ferrochelation of sirohydrochlorin to yield siroheme. The chain is Siroheme synthase from Escherichia coli O81 (strain ED1a).